A 361-amino-acid chain; its full sequence is Phospho-N-acetylmuramoyl-pentapeptide-transferase (361 aa).

A run of 10 helical transmembrane segments spans residues 28 to 48, 74 to 94, 99 to 119, 133 to 153, 168 to 188, 203 to 223, 236 to 256, 263 to 283, 288 to 308, and 338 to 358; these read LAII…IKFL, TMGG…LADL, IWIT…DDYA, SKLV…EYLD, LNLD…VGSS, VPIA…GNLI, TGEL…FLWF, VFMG…ISVI, IVLA…ILQV, and KVVI…LSSL.

The protein belongs to the glycosyltransferase 4 family. MraY subfamily. Mg(2+) is required as a cofactor.

It is found in the cell inner membrane. The enzyme catalyses UDP-N-acetyl-alpha-D-muramoyl-L-alanyl-gamma-D-glutamyl-meso-2,6-diaminopimeloyl-D-alanyl-D-alanine + di-trans,octa-cis-undecaprenyl phosphate = di-trans,octa-cis-undecaprenyl diphospho-N-acetyl-alpha-D-muramoyl-L-alanyl-D-glutamyl-meso-2,6-diaminopimeloyl-D-alanyl-D-alanine + UMP. It participates in cell wall biogenesis; peptidoglycan biosynthesis. In terms of biological role, catalyzes the initial step of the lipid cycle reactions in the biosynthesis of the cell wall peptidoglycan: transfers peptidoglycan precursor phospho-MurNAc-pentapeptide from UDP-MurNAc-pentapeptide onto the lipid carrier undecaprenyl phosphate, yielding undecaprenyl-pyrophosphoryl-MurNAc-pentapeptide, known as lipid I. This chain is Phospho-N-acetylmuramoyl-pentapeptide-transferase, found in Rickettsia akari (strain Hartford).